The chain runs to 435 residues: ATP-dependent RNA helicase RhlB (435 aa).

A Q motif motif is present at residues 9 to 37 (QKFADLGLNPQVVEGLEKKGFEFCTPIQA). In terms of domain architecture, Helicase ATP-binding spans 40-219 (LPVLLSGQDI…FEHMHNPEHV (180 aa)). 53-60 (AQTGTGKT) provides a ligand contact to ATP. A DEAD box motif is present at residues 165-168 (DEAD). Residues 245–390 (ALLQTLIEEE…VSDYDSSALI (146 aa)) enclose the Helicase C-terminal domain. The segment at 395–435 (APVRTPSARNQQRRTNTGGARSGDRKSNNRRPRQPRQHKEA) is disordered. Over residues 401–413 (SARNQQRRTNTGG) the composition is skewed to polar residues. The span at 422–435 (NNRRPRQPRQHKEA) shows a compositional bias: basic residues.

This sequence belongs to the DEAD box helicase family. RhlB subfamily. As to quaternary structure, component of the RNA degradosome, which is a multiprotein complex involved in RNA processing and mRNA degradation.

The protein resides in the cytoplasm. It carries out the reaction ATP + H2O = ADP + phosphate + H(+). Functionally, DEAD-box RNA helicase involved in RNA degradation. Has RNA-dependent ATPase activity and unwinds double-stranded RNA. The sequence is that of ATP-dependent RNA helicase RhlB from Vibrio vulnificus (strain YJ016).